The following is a 266-amino-acid chain: Phosphatidylglycerol--prolipoprotein diacylglyceryl transferase (266 aa).

The next 7 helical transmembrane spans lie at 17-37 (LKIHWYGLMYLIGIGGAWLLA), 56-76 (LVFWVACGVILGGRLGYVLFY), 92-112 (WKGGMSFHGGLLGVMLAVWWF), 120-140 (FFQLMDFIAPLVPIGLGAGRI), 171-191 (PSQLYQFALEGVALFVILWLF), 199-219 (ASVSGLFVLCYGIFRFVVEFV), and 233-253 (WLTMGQVLCVPMVLAGIALMV). Arginine 139 is a binding site for a 1,2-diacyl-sn-glycero-3-phospho-(1'-sn-glycerol).

It belongs to the Lgt family.

It localises to the cell inner membrane. The catalysed reaction is L-cysteinyl-[prolipoprotein] + a 1,2-diacyl-sn-glycero-3-phospho-(1'-sn-glycerol) = an S-1,2-diacyl-sn-glyceryl-L-cysteinyl-[prolipoprotein] + sn-glycerol 1-phosphate + H(+). It participates in protein modification; lipoprotein biosynthesis (diacylglyceryl transfer). Functionally, catalyzes the transfer of the diacylglyceryl group from phosphatidylglycerol to the sulfhydryl group of the N-terminal cysteine of a prolipoprotein, the first step in the formation of mature lipoproteins. This Pseudomonas aeruginosa (strain UCBPP-PA14) protein is Phosphatidylglycerol--prolipoprotein diacylglyceryl transferase.